The chain runs to 311 residues: MSKILVFGHQNPDSDAIGSSVAFAYLAKEAWGLDTEAVALGTPNEETAYVLDYFGVQAPRVVESAKAEGVETVILTDHNEFQQSISDIKDVTVYGVVDHHRVANFETANPLYMRLEPVGSASSIVYRMFKENGVSVPKELAGLLLSGLISDTLLLKSPTTHASDIPVAKELAELAGVNLEEYGLEMLKAGTNLSSKTAAELIDIDAKTFELNGEAVRVAQVNTVDINDILARQEEIEVAIQEAIVTEGYSDFVLMITDIVNSNSEILALGSNMAKVEAAFEFTLENNHAFLAGAVSRKKQVVPQLTESYNA.

Mn(2+) is bound by residues His9, Asp13, Asp15, Asp77, His99, and Asp151.

This sequence belongs to the PPase class C family. It depends on Mn(2+) as a cofactor.

The protein localises to the cytoplasm. The enzyme catalyses diphosphate + H2O = 2 phosphate + H(+). In Streptococcus agalactiae serotype Ia (strain ATCC 27591 / A909 / CDC SS700), this protein is Probable manganese-dependent inorganic pyrophosphatase.